A 740-amino-acid chain; its full sequence is Ethylene receptor 1 (740 aa).

3 helical membrane passes run 23-43, 54-74, and 92-112; these read ISDF…IYFV, VLVQ…INLW, and VLTA…IPDL. Positions 65 and 69 each coordinate Cu cation. Residues 158-307 enclose the GAF domain; that stretch reads DRHTILKTTL…VVADQVAVAL (150 aa). In terms of domain architecture, Histidine kinase spans 350–588; it reads VMNHEMRTPM…TFIVKLGIAD (239 aa). His-353 carries the post-translational modification Phosphohistidine; by autocatalysis. Residues 614-731 enclose the Response regulatory domain; that stretch reads KVLVMDDNGV…KMRSVLSELI (118 aa). Asp-662 carries the 4-aspartylphosphate modification.

It belongs to the ethylene receptor family. In terms of assembly, homodimer; disulfide-linked. Cu cation serves as cofactor. Activation probably requires a transfer of a phosphate group between a His in the transmitter domain and an Asp of the receiver domain. As to expression, in seeds and placenta.

It is found in the endoplasmic reticulum membrane. The enzyme catalyses ATP + protein L-histidine = ADP + protein N-phospho-L-histidine.. May act early in the ethylene signal transduction pathway, possibly as an ethylene receptor, or as a regulator of the pathway. The sequence is that of Ethylene receptor 1 (ETR1) from Cucumis melo var. cantalupensis (Netted muskmelon).